We begin with the raw amino-acid sequence, 112 residues long: UPF0235 protein Atu2660 (112 aa).

It belongs to the UPF0235 family.

This chain is UPF0235 protein Atu2660, found in Agrobacterium fabrum (strain C58 / ATCC 33970) (Agrobacterium tumefaciens (strain C58)).